Reading from the N-terminus, the 103-residue chain is Large ribosomal subunit protein bL21 (103 aa).

It belongs to the bacterial ribosomal protein bL21 family. Part of the 50S ribosomal subunit. Contacts protein L20.

In terms of biological role, this protein binds to 23S rRNA in the presence of protein L20. In Salmonella paratyphi A (strain ATCC 9150 / SARB42), this protein is Large ribosomal subunit protein bL21.